We begin with the raw amino-acid sequence, 689 residues long: Glycine--tRNA ligase beta subunit (689 aa).

It belongs to the class-II aminoacyl-tRNA synthetase family. In terms of assembly, tetramer of two alpha and two beta subunits.

The protein resides in the cytoplasm. The enzyme catalyses tRNA(Gly) + glycine + ATP = glycyl-tRNA(Gly) + AMP + diphosphate. The sequence is that of Glycine--tRNA ligase beta subunit from Dichelobacter nodosus (strain VCS1703A).